Here is a 424-residue protein sequence, read N- to C-terminus: Enolase (424 aa).

Glutamine 165 lines the (2R)-2-phosphoglycerate pocket. The active-site Proton donor is the glutamate 207. The Mg(2+) site is built by aspartate 244, glutamate 283, and aspartate 310. The (2R)-2-phosphoglycerate site is built by lysine 335, arginine 364, serine 365, and lysine 386. The active-site Proton acceptor is the lysine 335.

This sequence belongs to the enolase family. The cofactor is Mg(2+).

It localises to the cytoplasm. The protein resides in the secreted. The protein localises to the cell surface. It catalyses the reaction (2R)-2-phosphoglycerate = phosphoenolpyruvate + H2O. It functions in the pathway carbohydrate degradation; glycolysis; pyruvate from D-glyceraldehyde 3-phosphate: step 4/5. Functionally, catalyzes the reversible conversion of 2-phosphoglycerate (2-PG) into phosphoenolpyruvate (PEP). It is essential for the degradation of carbohydrates via glycolysis. This is Enolase from Chlamydia abortus (strain DSM 27085 / S26/3) (Chlamydophila abortus).